A 67-amino-acid polypeptide reads, in one-letter code: ATP synthase protein 8 (67 aa).

The helical transmembrane segment at 8–24 threads the bilayer; sequence TWFITILSMLMTLFILF. At Lys-54 the chain carries N6-acetyllysine; alternate. Position 54 is an N6-succinyllysine; alternate (Lys-54). Residue Lys-57 is modified to N6-acetyllysine.

This sequence belongs to the ATPase protein 8 family. F-type ATPases have 2 components, CF(1) - the catalytic core - and CF(0) - the membrane proton channel. Component of an ATP synthase complex composed of ATP5PB, ATP5MC1, ATP5F1E, ATP5PD, ATP5ME, ATP5PF, ATP5MF, MT-ATP6, MT-ATP8, ATP5F1A, ATP5F1B, ATP5F1D, ATP5F1C, ATP5PO, ATP5MG, ATP5MK and ATP5MJ. Interacts with PRICKLE3.

It localises to the mitochondrion membrane. In terms of biological role, mitochondrial membrane ATP synthase (F(1)F(0) ATP synthase or Complex V) produces ATP from ADP in the presence of a proton gradient across the membrane which is generated by electron transport complexes of the respiratory chain. F-type ATPases consist of two structural domains, F(1) - containing the extramembraneous catalytic core and F(0) - containing the membrane proton channel, linked together by a central stalk and a peripheral stalk. During catalysis, ATP synthesis in the catalytic domain of F(1) is coupled via a rotary mechanism of the central stalk subunits to proton translocation. Part of the complex F(0) domain. Minor subunit located with subunit a in the membrane. This Vicugna pacos (Alpaca) protein is ATP synthase protein 8 (MT-ATP8).